Consider the following 1046-residue polypeptide: Phospholipase D zeta 2 (1046 aa).

The PX domain maps to 45 to 205 (PKAAIVSVSR…KEVCKFLEVS (161 aa)). The PH domain maps to 215–343 (SKMKEGYVTV…WVKAVDEAGC (129 aa)). Positions 472-499 (YLWSHHEKIVIVDYQVCFIGGLDLCFGR) constitute a PLD phosphodiesterase 1 domain. Active-site residues include histidine 477, lysine 479, and aspartate 484. Residues 653–667 (GRGDLKLDSGARQDP) show a composition bias toward basic and acidic residues. The disordered stretch occupies residues 653-677 (GRGDLKLDSGARQDPGETSEESDLD). The PLD phosphodiesterase 2 domain maps to 847-874 (SQIYVHSKLMIVDDRIAVIGSSNINDRS). Residues histidine 852, lysine 854, and aspartate 859 contribute to the active site.

This sequence belongs to the phospholipase D family. PXPH-PLD subfamily. Requires Does not require Ca(2+) or any other cation for activity. as cofactor. Expressed in seedlings, roots, leaves, stems and flowers. Highest expression in roots. Detected only in the meristematic regions up to 4 days after germination and then at later stages in all tissues.

The enzyme catalyses a 1,2-diacyl-sn-glycero-3-phosphocholine + H2O = a 1,2-diacyl-sn-glycero-3-phosphate + choline + H(+). In terms of biological role, hydrolyzes glycerol-phospholipids at the terminal phosphodiesteric bond to generate phosphatidic acids (PA). Phosphatidylcholine-selective. Regulates vesicle trafficking and auxin responses. Required for the normal cycling of PIN-2 containing vesicles. Contributes to the supply of inorganic phosphorus for cell metabolism and diacylglycerol moieties for galactolipid synthesis in phosphorus-starved roots. Involved in root elongation during phosphate limitation. This chain is Phospholipase D zeta 2, found in Arabidopsis thaliana (Mouse-ear cress).